Here is a 299-residue protein sequence, read N- to C-terminus: dTDP-4-dehydrorhamnose reductase (299 aa).

NADH-binding positions include 10–12 (GQV), aspartate 30, 39–40 (DF), and 63–65 (AHT). An NADPH-binding site is contributed by 11 to 12 (QV). NADPH-binding positions include 39 to 40 (DF), 63 to 65 (AHT), and tyrosine 102. 104 to 105 (TD) contributes to the dTDP-beta-L-rhamnose binding site. Residues tyrosine 128 and lysine 132 each coordinate NADH. Tyrosine 128 and lysine 132 together coordinate NADPH. The Proton donor/acceptor role is filled by tyrosine 128. Tryptophan 153 lines the dTDP-beta-L-rhamnose pocket.

It belongs to the dTDP-4-dehydrorhamnose reductase family. Homodimer. Requires Mg(2+) as cofactor.

The enzyme catalyses dTDP-beta-L-rhamnose + NADP(+) = dTDP-4-dehydro-beta-L-rhamnose + NADPH + H(+). The protein operates within carbohydrate biosynthesis; dTDP-L-rhamnose biosynthesis. It functions in the pathway bacterial outer membrane biogenesis; LPS O-antigen biosynthesis. Functionally, involved in the biosynthesis of the dTDP-L-rhamnose which is an important component of lipopolysaccharide (LPS). Catalyzes the reduction of dTDP-6-deoxy-L-lyxo-4-hexulose to yield dTDP-L-rhamnose. RmlD uses NADH and NADPH nearly equally well. The protein is dTDP-4-dehydrorhamnose reductase of Escherichia coli (strain K12).